Here is a 397-residue protein sequence, read N- to C-terminus: Cathepsin E (397 aa).

The signal sequence occupies residues 1-16; it reads MKQFLVVLLILSFVHG. The propeptide at 17–49 is activation peptide; it reads IIRVPLKRQKSMRKILKEKGKLSHLWTKQGNEF. The region spanning 74–385 is the Peptidase A1 domain; that stretch reads YFGQISIGTP…DRGNNRVGFA (312 aa). Residue D92 is part of the active site. C105 and C110 form a disulfide bridge. N139 carries N-linked (GlcNAc...) asparagine glycosylation. C268 and C272 are disulfide-bonded. The active site involves D277. A disulfide bridge links C310 with C344.

The protein belongs to the peptidase A1 family. In terms of assembly, homodimer; disulfide-linked. Glycosylated. Contains high mannose-type oligosaccharide. Found in the larval foregut and adult stomach.

Its subcellular location is the endosome. The enzyme catalyses Similar to cathepsin D, but slightly broader specificity.. In terms of biological role, may have a role in immune function. Probably involved in the processing of antigenic peptides during MHC class II-mediated antigen presentation. In Aquarana catesbeiana (American bullfrog), this protein is Cathepsin E (CTSE).